A 166-amino-acid polypeptide reads, in one-letter code: Thiol peroxidase (166 aa).

Residues 18–164 (VKVGDKAPNF…YEKAIEAAKA (147 aa)) enclose the Thioredoxin domain. The active-site Cysteine sulfenic acid (-SOH) intermediate is Cys-60. A disulfide bridge connects residues Cys-60 and Cys-94.

The protein belongs to the peroxiredoxin family. Tpx subfamily. Homodimer.

It carries out the reaction a hydroperoxide + [thioredoxin]-dithiol = an alcohol + [thioredoxin]-disulfide + H2O. In terms of biological role, thiol-specific peroxidase that catalyzes the reduction of hydrogen peroxide and organic hydroperoxides to water and alcohols, respectively. Plays a role in cell protection against oxidative stress by detoxifying peroxides. The polypeptide is Thiol peroxidase (Halalkalibacterium halodurans (strain ATCC BAA-125 / DSM 18197 / FERM 7344 / JCM 9153 / C-125) (Bacillus halodurans)).